Consider the following 586-residue polypeptide: A-type ATP synthase subunit A (586 aa).

232–239 is an ATP binding site; that stretch reads GPFGSGKT.

This sequence belongs to the ATPase alpha/beta chains family. Has multiple subunits with at least A(3), B(3), C, D, E, F, H, I and proteolipid K(x).

The protein resides in the cell membrane. It catalyses the reaction ATP + H2O + 4 H(+)(in) = ADP + phosphate + 5 H(+)(out). In terms of biological role, component of the A-type ATP synthase that produces ATP from ADP in the presence of a proton gradient across the membrane. The A chain is the catalytic subunit. The sequence is that of A-type ATP synthase subunit A from Methanococcus vannielii (strain ATCC 35089 / DSM 1224 / JCM 13029 / OCM 148 / SB).